Reading from the N-terminus, the 138-residue chain is Large ribosomal subunit protein uL16 (138 aa).

The span at 1–16 shows a compositional bias: basic residues; that stretch reads MLIPKRVKYRRQHRPT. The segment at 1–23 is disordered; it reads MLIPKRVKYRRQHRPTRSGISKG.

This sequence belongs to the universal ribosomal protein uL16 family. Part of the 50S ribosomal subunit.

Binds 23S rRNA and is also seen to make contacts with the A and possibly P site tRNAs. The chain is Large ribosomal subunit protein uL16 from Corynebacterium glutamicum (strain R).